We begin with the raw amino-acid sequence, 288 residues long: ATP synthase gamma chain (288 aa).

Belongs to the ATPase gamma chain family. F-type ATPases have 2 components, CF(1) - the catalytic core - and CF(0) - the membrane proton channel. CF(1) has five subunits: alpha(3), beta(3), gamma(1), delta(1), epsilon(1). CF(0) has three main subunits: a, b and c.

Its subcellular location is the cell inner membrane. Its function is as follows. Produces ATP from ADP in the presence of a proton gradient across the membrane. The gamma chain is believed to be important in regulating ATPase activity and the flow of protons through the CF(0) complex. The chain is ATP synthase gamma chain from Acidovorax ebreus (strain TPSY) (Diaphorobacter sp. (strain TPSY)).